The primary structure comprises 384 residues: Ubiquitin-like modifier-activating enzyme 5 (384 aa).

The ATP site is built by Gly63, Asp84, Lys107, Asn130, and Asn164. Zn(2+) is bound by residues Cys206 and Cys209. Cys230 serves as the catalytic Glycyl thioester intermediate. The Zn(2+) site is built by Cys283 and Cys288. The disordered stretch occupies residues 352-375 (EAPEKSSAEATQAATAPVDDTSLE).

This sequence belongs to the ubiquitin-activating E1 family. UBA5 subfamily.

Its function is as follows. E1-like enzyme which activates UFM1. The sequence is that of Ubiquitin-like modifier-activating enzyme 5 from Drosophila persimilis (Fruit fly).